The sequence spans 185 residues: Elongation factor P (185 aa).

This sequence belongs to the elongation factor P family.

The protein resides in the cytoplasm. The protein operates within protein biosynthesis; polypeptide chain elongation. Functionally, involved in peptide bond synthesis. Stimulates efficient translation and peptide-bond synthesis on native or reconstituted 70S ribosomes in vitro. Probably functions indirectly by altering the affinity of the ribosome for aminoacyl-tRNA, thus increasing their reactivity as acceptors for peptidyl transferase. This is Elongation factor P from Thermosipho africanus (strain TCF52B).